The primary structure comprises 211 residues: uncharacterized protein (211 aa).

The next 3 membrane-spanning stretches (helical) occupy residues 22–42 (FINFVRIAICIVMVWIGGLKV), 111–131 (IIGATIVTVGLLTLSGIWFPV), and 133–153 (GMAGGLLTFGMSIVTLSFMIT).

To E.coli YkgB. This sequence to H.influenzae HI_0219.

It localises to the cell membrane. This is an uncharacterized protein from Mannheimia haemolytica (Pasteurella haemolytica).